The chain runs to 406 residues: 1-deoxy-D-xylulose 5-phosphate reductoisomerase (406 aa).

NADPH is bound by residues T21, G22, S23, I24, G47, Q50, and N127. K128 serves as a coordination point for 1-deoxy-D-xylulose 5-phosphate. Position 129 (E129) interacts with NADPH. Mn(2+) is bound at residue D151. The 1-deoxy-D-xylulose 5-phosphate site is built by S152, E153, S177, and H200. E153 serves as a coordination point for Mn(2+). G206 serves as a coordination point for NADPH. 4 residues coordinate 1-deoxy-D-xylulose 5-phosphate: S213, N218, K219, and E222. Position 222 (E222) interacts with Mn(2+).

Belongs to the DXR family. It depends on Mg(2+) as a cofactor. The cofactor is Mn(2+).

The catalysed reaction is 2-C-methyl-D-erythritol 4-phosphate + NADP(+) = 1-deoxy-D-xylulose 5-phosphate + NADPH + H(+). It functions in the pathway isoprenoid biosynthesis; isopentenyl diphosphate biosynthesis via DXP pathway; isopentenyl diphosphate from 1-deoxy-D-xylulose 5-phosphate: step 1/6. In terms of biological role, catalyzes the NADPH-dependent rearrangement and reduction of 1-deoxy-D-xylulose-5-phosphate (DXP) to 2-C-methyl-D-erythritol 4-phosphate (MEP). The protein is 1-deoxy-D-xylulose 5-phosphate reductoisomerase of Mycobacterium leprae (strain Br4923).